The chain runs to 330 residues: Putative zinc finger protein CONSTANS-LIKE 11 (330 aa).

Residues cysteine 5, cysteine 8, cysteine 28, and histidine 33 each coordinate Zn(2+). A B box-type 1; atypical zinc finger spans residues 5 to 47; the sequence is CDFCGTEKALIYCKSDSAKLCLNCDVNVHSANPLSQRHTRSLL. The segment at 48–88 adopts a B box-type 2; degenerate zinc-finger fold; sequence CEKCSLQPTAVHCMNENVSLCQGCQWTASNCTGLGHRLQSL. The 43-residue stretch at 276–318 folds into the CCT domain; it reads RDEAKKRYKQKKSKRMFGKQIRYASRKARADTRKRVKGRFVKS.

This sequence belongs to the CONSTANS family.

The protein resides in the nucleus. The protein is Putative zinc finger protein CONSTANS-LIKE 11 (COL11) of Arabidopsis thaliana (Mouse-ear cress).